An 81-amino-acid chain; its full sequence is Photosystem I iron-sulfur center (81 aa).

4Fe-4S ferredoxin-type domains follow at residues 2–31 (SHAV…MVPW) and 39–68 (IASS…IRVY). The [4Fe-4S] cluster site is built by C11, C14, C17, C21, C48, C51, C54, and C58.

As to quaternary structure, the cyanobacterial PSI reaction center is composed of one copy each of PsaA,B,C,D,E,F,I,J,K,L,M and X, and forms trimeric complexes. [4Fe-4S] cluster is required as a cofactor.

It localises to the cellular thylakoid membrane. It catalyses the reaction reduced [plastocyanin] + hnu + oxidized [2Fe-2S]-[ferredoxin] = oxidized [plastocyanin] + reduced [2Fe-2S]-[ferredoxin]. In terms of biological role, apoprotein for the two 4Fe-4S centers FA and FB of photosystem I (PSI); essential for photochemical activity. FB is the terminal electron acceptor of PSI, donating electrons to ferredoxin. The C-terminus interacts with PsaA/B/D and helps assemble the protein into the PSI complex. Required for binding of PsaD and PsaE to PSI. PSI is a plastocyanin/cytochrome c6-ferredoxin oxidoreductase, converting photonic excitation into a charge separation, which transfers an electron from the donor P700 chlorophyll pair to the spectroscopically characterized acceptors A0, A1, FX, FA and FB in turn. The polypeptide is Photosystem I iron-sulfur center (Prochlorococcus marinus (strain MIT 9211)).